A 270-amino-acid polypeptide reads, in one-letter code: Gap junction beta-3 protein (270 aa).

Residues 1 to 20 (MDWKKLQDLLSGVNQYSTAF) are Cytoplasmic-facing. The helical transmembrane segment at 21–40 (GRIWLSVVFVFRVLVYVVAA) threads the bilayer. Residues 41-75 (ERVWGDEQKDFDCNTRQPGCTNVCYDNFFPISNIR) lie on the Extracellular side of the membrane. The helical transmembrane segment at 76-98 (LWALQLIFVTCPSMLVILHVAYR) threads the bilayer. Over 99-126 (EERERKHRQKHGEQCAKLYSHPGKKHGG) the chain is Cytoplasmic. Residues 127–149 (LWWTYLFSLIFKLIIELVFLYVL) traverse the membrane as a helical segment. Residues 150-188 (HTLWHGFTMPRLVQCASIVPCPNTVDCYIARPTEKKVFT) lie on the Extracellular side of the membrane. Residues 189 to 211 (YFMVGASAVCIILTICEICYLIF) form a helical membrane-spanning segment. The Cytoplasmic segment spans residues 212–270 (HRIMRGISKGKSTKSISSPKSSSRASTCRCHHKLLESGDPEADPASEKLQASAPSLTPI). The disordered stretch occupies residues 246–270 (LESGDPEADPASEKLQASAPSLTPI).

Belongs to the connexin family. Beta-type (group I) subfamily. In terms of assembly, a connexon is composed of a hexamer of connexins. Interacts with CNST.

It is found in the cell membrane. Its subcellular location is the cell junction. The protein localises to the gap junction. One gap junction consists of a cluster of closely packed pairs of transmembrane channels, the connexons, through which materials of low MW diffuse from one cell to a neighboring cell. The protein is Gap junction beta-3 protein (Gjb3) of Mus musculus (Mouse).